The sequence spans 142 residues: Hemoglobin cathodic subunit alpha (142 aa).

Position 1 is an N-acetylserine (serine 1). Residues 1–142 (SLTAKDKALV…LSSTAADKYR (142 aa)) form the Globin domain. Histidine 59 is a binding site for O2. Histidine 88 is a heme b binding site.

Belongs to the globin family. As to quaternary structure, heterotetramer of two alpha chains and two beta chains.

Its function is as follows. Involved in oxygen transport from gills to the various peripheral tissues. The polypeptide is Hemoglobin cathodic subunit alpha (Hoplosternum littorale (Hassar)).